The following is a 339-amino-acid chain: MISFNNVSKLYESAGQSVHAVEDVTLSVEKGEIFGIIGFSGAGKSTLLRLVNMLERPTAGTISIDDKDITSLSTKELRKLRQRIGMIFQSFNLFNSRTVFGNIAYPLKLAKVPKNEIKERVNELLKFVGLEDKANYYPEQLSGGQKQRVGIARALATSPDILICDEATSALDPETTTEILNLLKKVNREYNLTILLITHEMHVVKEICHRVAVMEKGKVIEEGKLFDVFTQPKTKTTQNFVRSVINDHLPESVLAKIQNGGQIYRLTFTGEETGQPVLSYIAKNYNVDVNVLYGNIIELQNVLFGNLLVELQGEQREIQKALQHLRLQVQLKEVEAHAS.

Residues 2 to 241 (ISFNNVSKLY…PKTKTTQNFV (240 aa)) form the ABC transporter domain. 38 to 45 (GFSGAGKS) provides a ligand contact to ATP.

The protein belongs to the ABC transporter superfamily. Methionine importer (TC 3.A.1.24) family. In terms of assembly, the complex is composed of two ATP-binding proteins (MetN), two transmembrane proteins (MetI) and a solute-binding protein (MetQ).

It is found in the cell membrane. It catalyses the reaction L-methionine(out) + ATP + H2O = L-methionine(in) + ADP + phosphate + H(+). The enzyme catalyses D-methionine(out) + ATP + H2O = D-methionine(in) + ADP + phosphate + H(+). Part of the ABC transporter complex MetNIQ involved in methionine import. Responsible for energy coupling to the transport system. In Bacillus cereus (strain ATCC 14579 / DSM 31 / CCUG 7414 / JCM 2152 / NBRC 15305 / NCIMB 9373 / NCTC 2599 / NRRL B-3711), this protein is Methionine import ATP-binding protein MetN 2.